Reading from the N-terminus, the 187-residue chain is Elongation factor P (187 aa).

Belongs to the elongation factor P family.

It is found in the cytoplasm. The protein operates within protein biosynthesis; polypeptide chain elongation. In terms of biological role, involved in peptide bond synthesis. Stimulates efficient translation and peptide-bond synthesis on native or reconstituted 70S ribosomes in vitro. Probably functions indirectly by altering the affinity of the ribosome for aminoacyl-tRNA, thus increasing their reactivity as acceptors for peptidyl transferase. The polypeptide is Elongation factor P (Zymomonas mobilis subsp. mobilis (strain ATCC 31821 / ZM4 / CP4)).